The chain runs to 299 residues: Heat stress transcription factor B-2a (299 aa).

A DNA-binding region spans residues 21–115 (PTPFLTKTFN…LLREIQRRKI (95 aa)). The segment at 119-157 (HQTVVAPSSEQRNQTMVVSPSNSGEDNNNNQVMSSSPSS) is disordered. Positions 166-211 (TGNGGLSVELLEENEKLRSQNIQLNRELTQMKSICDNIYSLMSNYV) are hydrophobic repeat HR-A/B. The short motif at 261-264 (KRTR) is the Nuclear localization signal element.

It belongs to the HSF family. Class B subfamily. Homotrimer. Post-translationally, exhibits temperature-dependent phosphorylation.

Its subcellular location is the nucleus. Its function is as follows. Transcriptional regulator that specifically binds DNA sequence 5'-AGAAnnTTCT-3' known as heat shock promoter elements (HSE). The polypeptide is Heat stress transcription factor B-2a (HSFB2A) (Arabidopsis thaliana (Mouse-ear cress)).